The following is a 160-amino-acid chain: Cytochrome b6-f complex subunit 4 (160 aa).

The next 3 membrane-spanning stretches (helical) occupy residues 36-56 (ILFT…GLAI), 95-115 (LLGI…PFIE), and 131-151 (AVFL…CFPI).

The protein belongs to the cytochrome b family. PetD subfamily. The 4 large subunits of the cytochrome b6-f complex are cytochrome b6, subunit IV (17 kDa polypeptide, PetD), cytochrome f and the Rieske protein, while the 4 small subunits are PetG, PetL, PetM and PetN. The complex functions as a dimer.

It is found in the cellular thylakoid membrane. Functionally, component of the cytochrome b6-f complex, which mediates electron transfer between photosystem II (PSII) and photosystem I (PSI), cyclic electron flow around PSI, and state transitions. In Picosynechococcus sp. (strain ATCC 27264 / PCC 7002 / PR-6) (Agmenellum quadruplicatum), this protein is Cytochrome b6-f complex subunit 4.